We begin with the raw amino-acid sequence, 498 residues long: L-amino acid oxidase Cdc18 (498 aa).

The N-terminal stretch at 1–2 is a signal peptide; sequence SC. A disulfide bridge links C12 with C173. FAD is bound by residues 45 to 46, 65 to 66, R73, and 87 to 90; these read MA, EA, and GPMR. R90 and H223 together coordinate substrate. V263 serves as a coordination point for FAD. C333 and C414 are joined by a disulfide. N363 carries N-linked (GlcNAc...) asparagine glycosylation. Substrate is bound at residue Y374. FAD contacts are provided by residues E459 and 466-471; that span reads GWIDST. 466 to 467 lines the substrate pocket; sequence GW.

It belongs to the flavin monoamine oxidase family. FIG1 subfamily. Monomer. This is in contrast with most of its orthologs, that are non-covalently linked homodimers. Requires FAD as cofactor. Expressed by the venom gland.

The protein resides in the secreted. The enzyme catalyses an L-alpha-amino acid + O2 + H2O = a 2-oxocarboxylate + H2O2 + NH4(+). The catalysed reaction is L-leucine + O2 + H2O = 4-methyl-2-oxopentanoate + H2O2 + NH4(+). Catalyzes an oxidative deamination of predominantly hydrophobic and aromatic L-amino acids, thus producing hydrogen peroxide that may contribute to the diverse toxic effects of this enzyme. Shows activity on L-Leu. Damages cell membranes of the Gram-positive bacteria S.aureus (MIC=8 ug/ml and MBC=16 ug/ml) and the Gram-negative bacteria A.baumannii (MIC=16 ug/ml and MBC=32 ug/ml). This antimicrobial activity is dependent on the production of hydrogen peroxyde, since it is inhibited by catalase, a hydrogen peroxyde scavenger. The sequence is that of L-amino acid oxidase Cdc18 from Crotalus durissus cumanensis (South American rattlesnake).